Here is a 154-residue protein sequence, read N- to C-terminus: Urease accessory protein UreE (154 aa).

Positions 135-154 (PENGAYHGTGGHHHHHHDHE) are disordered. Over residues 144–154 (GGHHHHHHDHE) the composition is skewed to basic residues.

It belongs to the UreE family.

It localises to the cytoplasm. In terms of biological role, involved in urease metallocenter assembly. Binds nickel. Probably functions as a nickel donor during metallocenter assembly. The chain is Urease accessory protein UreE from Teredinibacter turnerae (strain ATCC 39867 / T7901).